A 511-amino-acid polypeptide reads, in one-letter code: ATP synthase subunit beta, mitochondrial (511 aa).

The transit peptide at 1 to 33 (MVLPRLYTATSRAAFKAAKQSAPLLSTSWKRCM) directs the protein to the mitochondrion. A Phosphothreonine modification is found at Thr-112. 190 to 197 (GGAGVGKT) is an ATP binding site. Thr-237 carries the post-translational modification Phosphothreonine. At Ser-373 the chain carries Phosphoserine.

The protein belongs to the ATPase alpha/beta chains family. As to quaternary structure, F-type ATPases have 2 components, CF(1) - the catalytic core - and CF(0) - the membrane proton channel. CF(1) has five subunits: alpha(3), beta(3), gamma(1), delta(1), epsilon(1). CF(0) has three main subunits: a, b and c.

Its subcellular location is the mitochondrion. The protein resides in the mitochondrion inner membrane. The catalysed reaction is ATP + H2O + 4 H(+)(in) = ADP + phosphate + 5 H(+)(out). Functionally, mitochondrial membrane ATP synthase (F(1)F(0) ATP synthase or Complex V) produces ATP from ADP in the presence of a proton gradient across the membrane which is generated by electron transport complexes of the respiratory chain. F-type ATPases consist of two structural domains, F(1) - containing the extramembraneous catalytic core, and F(0) - containing the membrane proton channel, linked together by a central stalk and a peripheral stalk. During catalysis, ATP synthesis in the catalytic domain of F(1) is coupled via a rotary mechanism of the central stalk subunits to proton translocation. Subunits alpha and beta form the catalytic core in F(1). Rotation of the central stalk against the surrounding alpha(3)beta(3) subunits leads to hydrolysis of ATP in three separate catalytic sites on the beta subunits. The protein is ATP synthase subunit beta, mitochondrial (ATP2) of Saccharomyces cerevisiae (strain ATCC 204508 / S288c) (Baker's yeast).